A 594-amino-acid polypeptide reads, in one-letter code: Beta-mannosyltransferase 3 (594 aa).

The Cytoplasmic portion of the chain corresponds to 1–6 (MRIRSN). Residues 7-27 (VLLLSTAGALALVWFAVVFSW) form a helical membrane-spanning segment. Residues 28 to 594 (DDKSIFGIPT…KDEVKDTKAK (567 aa)) lie on the Extracellular side of the membrane. N-linked (GlcNAc...) asparagine glycosylation is present at N305. Residues 512–594 (VTRGEEDRLK…KDEVKDTKAK (83 aa)) adopt a coiled-coil conformation. Residues 517–558 (EDRLKNKEKERKIEEKRKKEEERKKKEEEKKKKEEEEKKKKE) show a composition bias toward basic and acidic residues. The interval 517–564 (EDRLKNKEKERKIEEKRKKEEERKKKEEEKKKKEEEEKKKKEEEEEEE) is disordered.

It belongs to the BMT family.

The protein localises to the membrane. Functionally, beta-mannosyltransferase involved in cell wall biosynthesis. This chain is Beta-mannosyltransferase 3 (BMT3), found in Komagataella phaffii (strain ATCC 76273 / CBS 7435 / CECT 11047 / NRRL Y-11430 / Wegner 21-1) (Yeast).